The sequence spans 103 residues: NADH-quinone oxidoreductase subunit K (103 aa).

3 helical membrane passes run 5–25 (ISSY…GALT), 30–50 (VVVL…LVAF), and 66–86 (LFTM…LIAL).

This sequence belongs to the complex I subunit 4L family. As to quaternary structure, NDH-1 is composed of 14 different subunits. Subunits NuoA, H, J, K, L, M, N constitute the membrane sector of the complex.

The protein localises to the cell membrane. The enzyme catalyses a quinone + NADH + 5 H(+)(in) = a quinol + NAD(+) + 4 H(+)(out). Its function is as follows. NDH-1 shuttles electrons from NADH, via FMN and iron-sulfur (Fe-S) centers, to quinones in the respiratory chain. The immediate electron acceptor for the enzyme in this species is believed to be a menaquinone. Couples the redox reaction to proton translocation (for every two electrons transferred, four hydrogen ions are translocated across the cytoplasmic membrane), and thus conserves the redox energy in a proton gradient. This Brevibacillus brevis (strain 47 / JCM 6285 / NBRC 100599) protein is NADH-quinone oxidoreductase subunit K.